The chain runs to 86 residues: Small ribosomal subunit protein bS20 (86 aa).

Residues Met1–Arg25 form a disordered region. Residues Ser7–Arg25 show a composition bias toward basic residues.

This sequence belongs to the bacterial ribosomal protein bS20 family.

Its function is as follows. Binds directly to 16S ribosomal RNA. The chain is Small ribosomal subunit protein bS20 from Vesicomyosocius okutanii subsp. Calyptogena okutanii (strain HA).